The primary structure comprises 284 residues: 2-dehydro-3-deoxyphosphooctonate aldolase (284 aa).

This sequence belongs to the KdsA family.

It localises to the cytoplasm. The catalysed reaction is D-arabinose 5-phosphate + phosphoenolpyruvate + H2O = 3-deoxy-alpha-D-manno-2-octulosonate-8-phosphate + phosphate. It functions in the pathway carbohydrate biosynthesis; 3-deoxy-D-manno-octulosonate biosynthesis; 3-deoxy-D-manno-octulosonate from D-ribulose 5-phosphate: step 2/3. It participates in bacterial outer membrane biogenesis; lipopolysaccharide biosynthesis. The chain is 2-dehydro-3-deoxyphosphooctonate aldolase from Salmonella arizonae (strain ATCC BAA-731 / CDC346-86 / RSK2980).